Consider the following 819-residue polypeptide: Metabotropic glutamate receptor-like protein O (819 aa).

A signal peptide spans 1–19; sequence MKKVFFLILILNCVVGALS. The Extracellular portion of the chain corresponds to 20-394; sequence NKNICKISLL…FVDSYSNSIK (375 aa). N-linked (GlcNAc...) asparagine glycosylation is found at Asn99, Asn185, Asn277, Asn295, Asn330, and Asn370. The chain crosses the membrane as a helical span at residues 395–415; that stretch reads ISILSVSIFCIFICVLGMIFI. The Cytoplasmic segment spans residues 416–428; that stretch reads TVLRNARILKSSS. The helical transmembrane segment at 429 to 449 threads the bilayer; it reads PSFLLLILFGCIVIFTGCILF. Residues 450–457 are Extracellular-facing; that stretch reads SQPATDKT. The chain crosses the membrane as a helical span at residues 458–478; that stretch reads CQGRVWLLSIGYTIFLGSLLI. Topologically, residues 479 to 503 are cytoplasmic; sequence KNWRVWLLFDNKKLRKRSITNWKLY. Residues 504-524 traverse the membrane as a helical segment; it reads PWVAGILVVDVLILALWQGLG. Residues 525–550 are Extracellular-facing; it reads DIKSESRIIGTSFYQYTNVCTNNDQG. Residues 551 to 571 traverse the membrane as a helical segment; it reads SIALYILLAFHGLKLLGTCFI. Over 572–587 the chain is Cytoplasmic; the sequence is SFKIKLVDIEEFNESK. Residues 588 to 608 traverse the membrane as a helical segment; that stretch reads PITTSVFIILFCIFTIILLIA. Over 609–624 the chain is Extracellular; that stretch reads PSSSSSSASSPQPIAS. A helical transmembrane segment spans residues 625 to 645; it reads LETIICICSVTTTAISIGLLF. At 646–819 the chain is on the cytoplasmic side; it reads GDKIYFITTQ…NNENEIISDT (174 aa). Positions 674–819 are disordered; sequence KDCDDDDDDS…NNENEIISDT (146 aa). Residues 695–712 show a composition bias toward basic residues; it reads NKNKNKNRNQSEKKKRPN. Positions 726–739 are enriched in polar residues; that stretch reads ESVVFNPPSNNDLT. Positions 748–768 are enriched in basic and acidic residues; it reads GIKEGHGHDSENNDEYEHHED. The segment covering 769 to 798 has biased composition (acidic residues); that stretch reads EDHEYEGEGEDEDHEDEYEVENDIEQEQEQ. The span at 799–808 shows a compositional bias: low complexity; that stretch reads ESSNISISTK.

This sequence in the N-terminal section; belongs to the BMP lipoprotein family. It in the C-terminal section; belongs to the G-protein coupled receptor 3 family. GABA-B receptor subfamily.

Its subcellular location is the membrane. This chain is Metabotropic glutamate receptor-like protein O (grlO), found in Dictyostelium discoideum (Social amoeba).